Here is a 382-residue protein sequence, read N- to C-terminus: Saccharopine dehydrogenase [NAD(+), L-lysine-forming] (382 aa).

L-saccharopine contacts are provided by Arg20 and Lys79. Lys79 serves as the catalytic Proton acceptor. The Proton donor role is filled by His98. Gln103 lines the L-saccharopine pocket. NAD(+) is bound at residue Arg132. Residues Arg133 and Phe137 each contribute to the L-saccharopine site. NAD(+) is bound by residues Gly215–Arg216, Asp239, Thr243, Tyr263, and Val290. Cysteines 217 and 261 form a disulfide. Ser291 to Asp293 contributes to the L-saccharopine binding site. Position 330–333 (Ile330–Leu333) interacts with NAD(+).

This sequence belongs to the AlaDH/PNT family. As to quaternary structure, monomer.

It catalyses the reaction L-saccharopine + NAD(+) + H2O = L-lysine + 2-oxoglutarate + NADH + H(+). The protein operates within amino-acid biosynthesis; L-lysine biosynthesis via AAA pathway; L-lysine from L-alpha-aminoadipate (fungal route): step 3/3. Functionally, catalyzes the NAD(+)-dependent cleavage of saccharopine to L-lysine and 2-oxoglutarate, the final step in the alpha-aminoadipate (AAA) pathway for lysin biosynthesis. The chain is Saccharopine dehydrogenase [NAD(+), L-lysine-forming] from Candida albicans (strain SC5314 / ATCC MYA-2876) (Yeast).